The sequence spans 87 residues: U1-theraphotoxin-Ct1a (87 aa).

The N-terminal stretch at 1–23 is a signal peptide; it reads MKTFTLIAILTCAVLVIFHAAAA. Positions 24–48 are excised as a propeptide; it reads EELEVQDVIQPEDTLTGLATLDEDR.

This sequence belongs to the neurotoxin 12 (Hwtx-2) family. 03 (juruin) subfamily. Contains 3 disulfide bonds. Two different connectivities are observed in similar proteins (C1-C3, C2-C5, C4-C6 or C1-C4, C2-C5, C3-C6). In terms of tissue distribution, expressed by the venom gland.

The protein resides in the secreted. Functionally, this toxin causes paralysis and death to sheep blowflies. It may inhibit voltage-gated calcium channels. The sequence is that of U1-theraphotoxin-Ct1a from Coremiocnemis tropix (Australian tarantula spider).